Here is a 309-residue protein sequence, read N- to C-terminus: Cilia-and flagella-associated protein 96 (309 aa).

The interval 220-249 (EEKKKTISNTFKPSSPGKKPGGMKAGTFDP) is disordered.

This sequence belongs to the CFAP96 family. In terms of tissue distribution, detected in testis and fetal liver.

Its subcellular location is the cytoplasm. The protein resides in the cytoskeleton. The protein localises to the microtubule organizing center. It is found in the centrosome. In Homo sapiens (Human), this protein is Cilia-and flagella-associated protein 96.